A 293-amino-acid polypeptide reads, in one-letter code: Triosephosphate isomerase (293 aa).

25 to 27 (NWK) is a binding site for substrate. The active-site Electrophile is His-117. The active-site Proton acceptor is the Glu-218.

This sequence belongs to the triosephosphate isomerase family. As to quaternary structure, homodimer.

The protein resides in the cytoplasm. It carries out the reaction D-glyceraldehyde 3-phosphate = dihydroxyacetone phosphate. The protein operates within carbohydrate biosynthesis; gluconeogenesis. It functions in the pathway carbohydrate degradation; glycolysis; D-glyceraldehyde 3-phosphate from glycerone phosphate: step 1/1. Its function is as follows. Involved in the gluconeogenesis. Catalyzes stereospecifically the conversion of dihydroxyacetone phosphate (DHAP) to D-glyceraldehyde-3-phosphate (G3P). This Tropheryma whipplei (strain TW08/27) (Whipple's bacillus) protein is Triosephosphate isomerase.